We begin with the raw amino-acid sequence, 450 residues long: MNPNQKIITIGSICMVVGIISLMLQIGNIISVWVSHIIQTWHPNQPEPCNQSINFYTEQAAASVTLAGNSSLCPISGWAIYSKDNSIRIGSKGDVFVIREPFISCSHLECRTFFLTQGALLNDKHSNGTVKDRSPYRTLMSCPVGEAPSPYKSRFESVAWSASACHDGISWLTIGISGPDNGAVAVLKYNGIITDTIKSWRNNILRTQESECACVNGSCFTVMTDGPSNEQASYKIFKIEKGRVVKSVELNAPNYHYEECSCYPDAGEITCVCRDNWHGSNRPWVSFNQNLEYQIGYICSGVFGDSPRPNDGTGSCGPVSLNGAYGVKGFSFKYGNGVWIGRTKSTSSRSGFEMIWDPNGWTETDSSFSLKQDIIAITDWSGYSGSFIQHPELTGLNCMRPCFWVELIRGRPKEKTIWTSGSSISFCGVNSDTVGWSWPDGAELPFTIDK.

The Intravirion portion of the chain corresponds to 1–6 (MNPNQK). The chain crosses the membrane as a helical span at residues 7 to 27 (IITIGSICMVVGIISLMLQIG). The involved in apical transport and lipid raft association stretch occupies residues 11-33 (GSICMVVGIISLMLQIGNIISVW). Residues 28-450 (NIISVWVSHI…GAELPFTIDK (423 aa)) are Virion surface-facing. Residues 36–71 (HIIQTWHPNQPEPCNQSINFYTEQAAASVTLAGNSS) are hypervariable stalk region. Asn50 and Asn69 each carry an N-linked (GlcNAc...) asparagine; by host glycan. The interval 72 to 450 (LCPISGWAIY…GAELPFTIDK (379 aa)) is head of neuraminidase. 8 cysteine pairs are disulfide-bonded: Cys73–Cys398, Cys105–Cys110, Cys165–Cys212, Cys214–Cys219, Cys260–Cys273, Cys262–Cys271, Cys299–Cys316, and Cys402–Cys427. Arg99 is a substrate binding site. Asn127 carries an N-linked (GlcNAc...) asparagine; by host glycan. Asp132 (proton donor/acceptor) is an active-site residue. Residue Arg133 participates in substrate binding. Asn216 carries N-linked (GlcNAc...) asparagine; by host glycosylation. Position 258-259 (258-259 (EE)) interacts with substrate. Arg274 provides a ligand contact to substrate. Residues Asp275, Gly279, and Asp305 each contribute to the Ca(2+) site. Substrate is bound at residue Arg349. Residue Tyr383 is the Nucleophile of the active site.

Belongs to the glycosyl hydrolase 34 family. In terms of assembly, homotetramer. It depends on Ca(2+) as a cofactor. Post-translationally, N-glycosylated.

It is found in the virion membrane. It localises to the host apical cell membrane. It catalyses the reaction Hydrolysis of alpha-(2-&gt;3)-, alpha-(2-&gt;6)-, alpha-(2-&gt;8)- glycosidic linkages of terminal sialic acid residues in oligosaccharides, glycoproteins, glycolipids, colominic acid and synthetic substrates.. With respect to regulation, inhibited by the neuraminidase inhibitors zanamivir (Relenza) and oseltamivir (Tamiflu). These drugs interfere with the release of progeny virus from infected cells and are effective against all influenza strains. Resistance to neuraminidase inhibitors is quite rare. Catalyzes the removal of terminal sialic acid residues from viral and cellular glycoconjugates. Cleaves off the terminal sialic acids on the glycosylated HA during virus budding to facilitate virus release. Additionally helps virus spread through the circulation by further removing sialic acids from the cell surface. These cleavages prevent self-aggregation and ensure the efficient spread of the progeny virus from cell to cell. Otherwise, infection would be limited to one round of replication. Described as a receptor-destroying enzyme because it cleaves a terminal sialic acid from the cellular receptors. May facilitate viral invasion of the upper airways by cleaving the sialic acid moieties on the mucin of the airway epithelial cells. Likely to plays a role in the budding process through its association with lipid rafts during intracellular transport. May additionally display a raft-association independent effect on budding. Plays a role in the determination of host range restriction on replication and virulence. Sialidase activity in late endosome/lysosome traffic seems to enhance virus replication. This Aves (Cat) protein is Neuraminidase.